The following is a 280-amino-acid chain: Alpha-methyl-mannoside-specific lectin (280 aa).

A signal peptide spans 1 to 26 (MAISKKILPLLSIATIFLLLLNKAHS). Positions 114 and 134 each coordinate a carbohydrate. Mn(2+)-binding residues include glutamate 156 and aspartate 158. Ca(2+) contacts are provided by aspartate 158 and phenylalanine 160. 2 residues coordinate a carbohydrate: serine 165 and asparagine 166. Ca(2+)-binding residues include asparagine 166 and aspartate 169. The Mn(2+) site is built by aspartate 169 and histidine 174. Positions 248 and 250 each coordinate a carbohydrate.

It belongs to the leguminous lectin family. In terms of assembly, homodimer. Glycosylated.

Its function is as follows. Alpha-methyl-D-mannoside-specific lectin. Has hemagglutinating activity towards rabbit erythrocytes. Binds to cytokinins and significantly inhibits physiological effects of cytokinin activity such as cotyledon expansion and delayed leaf senescence. The protein is Alpha-methyl-mannoside-specific lectin of Arachis hypogaea (Peanut).